The sequence spans 241 residues: Probable WRKY transcription factor 63 (241 aa).

Positions 56-79 (NSPNRQPHHESSSRDMAGLVPQRS) are disordered. Residues 97–165 (SPNPRLDDGF…YLGQHTCKAF (69 aa)) constitute a DNA-binding region (WRKY).

It belongs to the WRKY group III family.

The protein localises to the nucleus. Functionally, transcription factor. Interacts specifically with the W box (5'-(T)TGAC[CT]-3'), a frequently occurring elicitor-responsive cis-acting element. The chain is Probable WRKY transcription factor 63 (WRKY63) from Arabidopsis thaliana (Mouse-ear cress).